The following is a 58-amino-acid chain: Protein translocase subunit SecE (58 aa).

The helical transmembrane segment at isoleucine 38–isoleucine 58 threads the bilayer.

This sequence belongs to the SecE/SEC61-gamma family. As to quaternary structure, component of the Sec protein translocase complex. Heterotrimer consisting of SecY (alpha), SecG (beta) and SecE (gamma) subunits. The heterotrimers can form oligomers, although 1 heterotrimer is thought to be able to translocate proteins. Interacts with the ribosome. May interact with SecDF, and other proteins may be involved.

The protein localises to the cell membrane. Functionally, essential subunit of the Sec protein translocation channel SecYEG. Clamps together the 2 halves of SecY. May contact the channel plug during translocation. The polypeptide is Protein translocase subunit SecE (Acidianus ambivalens (Desulfurolobus ambivalens)).